The sequence spans 631 residues: Phosphomethylpyrimidine synthase (631 aa).

Substrate-binding positions include Asn-239, Met-268, Tyr-297, His-333, 353 to 355 (SRG), 394 to 397 (DGLR), and Glu-433. His-437 contacts Zn(2+). Residue Tyr-460 coordinates substrate. Residue His-501 participates in Zn(2+) binding. Positions 581, 584, and 589 each coordinate [4Fe-4S] cluster.

It belongs to the ThiC family. As to quaternary structure, homodimer. [4Fe-4S] cluster is required as a cofactor.

The catalysed reaction is 5-amino-1-(5-phospho-beta-D-ribosyl)imidazole + S-adenosyl-L-methionine = 4-amino-2-methyl-5-(phosphooxymethyl)pyrimidine + CO + 5'-deoxyadenosine + formate + L-methionine + 3 H(+). It functions in the pathway cofactor biosynthesis; thiamine diphosphate biosynthesis. Its function is as follows. Catalyzes the synthesis of the hydroxymethylpyrimidine phosphate (HMP-P) moiety of thiamine from aminoimidazole ribotide (AIR) in a radical S-adenosyl-L-methionine (SAM)-dependent reaction. This Shigella sonnei (strain Ss046) protein is Phosphomethylpyrimidine synthase.